Consider the following 230-residue polypeptide: ATP phosphoribosyltransferase (230 aa).

Belongs to the ATP phosphoribosyltransferase family. Short subfamily. As to quaternary structure, heteromultimer composed of HisG and HisZ subunits.

The protein resides in the cytoplasm. The catalysed reaction is 1-(5-phospho-beta-D-ribosyl)-ATP + diphosphate = 5-phospho-alpha-D-ribose 1-diphosphate + ATP. Its pathway is amino-acid biosynthesis; L-histidine biosynthesis; L-histidine from 5-phospho-alpha-D-ribose 1-diphosphate: step 1/9. Functionally, catalyzes the condensation of ATP and 5-phosphoribose 1-diphosphate to form N'-(5'-phosphoribosyl)-ATP (PR-ATP). Has a crucial role in the pathway because the rate of histidine biosynthesis seems to be controlled primarily by regulation of HisG enzymatic activity. The sequence is that of ATP phosphoribosyltransferase (hisG) from Chelativorans sp. (strain BNC1).